Reading from the N-terminus, the 251-residue chain is Gamma-interferon-inducible lysosomal thiol reductase (251 aa).

The first 21 residues, 1 to 21 (MFGFRLSVLLFAVCSLSACSC), serve as a signal peptide directing secretion. Residues 22-60 (MFVNSCKYPPSQWCDSRDIAAQCGVLEQCMKFNASPVTV) enclose the Saposin A-type domain. A disulfide bridge links C68 with C71. N108 carries N-linked (GlcNAc...) asparagine glycosylation.

The protein belongs to the GILT family. In terms of assembly, dimer; disulfide-linked. In terms of tissue distribution, highly expressed in spleen and kidney. Also detected at lower levels in liver, heart, brain, intestine and gill.

It localises to the secreted. The protein localises to the lysosome. Functionally, lysosomal thiol reductase that can reduce protein disulfide bonds. May facilitate the complete unfolding of proteins destined for lysosomal degradation. Plays an important role in antigen processing. In Carassius auratus (Goldfish), this protein is Gamma-interferon-inducible lysosomal thiol reductase.